The following is a 390-amino-acid chain: Phosphopentomutase (390 aa).

Positions 11, 283, 288, 324, 325, and 336 each coordinate Mn(2+).

Belongs to the phosphopentomutase family. It depends on Mn(2+) as a cofactor.

Its subcellular location is the cytoplasm. It catalyses the reaction 2-deoxy-alpha-D-ribose 1-phosphate = 2-deoxy-D-ribose 5-phosphate. The catalysed reaction is alpha-D-ribose 1-phosphate = D-ribose 5-phosphate. It functions in the pathway carbohydrate degradation; 2-deoxy-D-ribose 1-phosphate degradation; D-glyceraldehyde 3-phosphate and acetaldehyde from 2-deoxy-alpha-D-ribose 1-phosphate: step 1/2. Isomerase that catalyzes the conversion of deoxy-ribose 1-phosphate (dRib-1-P) and ribose 1-phosphate (Rib-1-P) to deoxy-ribose 5-phosphate (dRib-5-P) and ribose 5-phosphate (Rib-5-P), respectively. The polypeptide is Phosphopentomutase (Clostridium novyi (strain NT)).